A 217-amino-acid polypeptide reads, in one-letter code: Probable chemoreceptor glutamine deamidase CheD (217 aa).

Positions 194–217 (ATSGTAPSRGGELFTRASASRTPS) are disordered.

The protein belongs to the CheD family.

It carries out the reaction L-glutaminyl-[protein] + H2O = L-glutamyl-[protein] + NH4(+). Its function is as follows. Probably deamidates glutamine residues to glutamate on methyl-accepting chemotaxis receptors (MCPs), playing an important role in chemotaxis. The chain is Probable chemoreceptor glutamine deamidase CheD from Cupriavidus pinatubonensis (strain JMP 134 / LMG 1197) (Cupriavidus necator (strain JMP 134)).